Here is a 455-residue protein sequence, read N- to C-terminus: tRNA modification GTPase MnmE (455 aa).

Residues arginine 24, glutamate 81, and lysine 120 each coordinate (6S)-5-formyl-5,6,7,8-tetrahydrofolate. One can recognise a TrmE-type G domain in the interval 216–378 (GMTVVIAGRP…LREHLKACMG (163 aa)). Asparagine 226 is a K(+) binding site. Residues 226–231 (NAGKSS), 245–251 (TDIAGTT), 270–273 (DTAG), 335–338 (NKAD), and 359–361 (SAR) each bind GTP. Serine 230 contacts Mg(2+). Residues threonine 245, isoleucine 247, and threonine 250 each coordinate K(+). Position 251 (threonine 251) interacts with Mg(2+). Lysine 455 serves as a coordination point for (6S)-5-formyl-5,6,7,8-tetrahydrofolate.

Belongs to the TRAFAC class TrmE-Era-EngA-EngB-Septin-like GTPase superfamily. TrmE GTPase family. In terms of assembly, homodimer. Heterotetramer of two MnmE and two MnmG subunits. The cofactor is K(+).

It is found in the cytoplasm. Its function is as follows. Exhibits a very high intrinsic GTPase hydrolysis rate. Involved in the addition of a carboxymethylaminomethyl (cmnm) group at the wobble position (U34) of certain tRNAs, forming tRNA-cmnm(5)s(2)U34. This chain is tRNA modification GTPase MnmE, found in Pseudomonas aeruginosa (strain UCBPP-PA14).